A 707-amino-acid chain; its full sequence is Serine/threonine protein kinase UL97 (707 aa).

A compositionally biased stretch (low complexity) spans M1–L14. 4 disordered regions span residues M1–R33, D113–Y146, F176–R198, and E231–S264. The span at D113–R127 shows a compositional bias: basic and acidic residues. A compositionally biased stretch (low complexity) spans G178 to G188. Residues L337 to V345 and K359 each bind ATP. The Proton acceptor role is filled by D456.

The protein belongs to the protein kinase superfamily. Tyr protein kinase family. HCMV ganciclovir subfamily. As to quaternary structure, interacts with UL83. Autophosphorylates on serine and threonine residues.

It is found in the virion. The catalysed reaction is L-seryl-[protein] + ATP = O-phospho-L-seryl-[protein] + ADP + H(+). The enzyme catalyses L-threonyl-[protein] + ATP = O-phospho-L-threonyl-[protein] + ADP + H(+). In terms of biological role, serine/threonine protein kinase that plays important roles in several processes including nuclear viral egress, viral replication or regulation of host cell cycle progression. Participates in the acquisition of tegument during virion morphogenesis in the nucleus. Phosphorylates the viral nuclear egress complex (NEC) subunits UL50 and UL53. Redistributes the host nuclear lamina by phosphorylating cellular Lamins-A/C. Plays a role in viral DNA synthesis by phosphorylating the DNA polymerase processivity factor UL44. Stimulates host cell cycle to support viral DNA synthesis by phosphorylating host retinoblastoma/RB1 protein. Additional substrates have been identified including host EF1D or H2B. Also phosphorylates host SAMHD1 and thereby counteracts its antiviral effect by reducing its dNTP hydrolase activity. This Human cytomegalovirus (strain AD169) (HHV-5) protein is Serine/threonine protein kinase UL97 (UL97).